A 712-amino-acid polypeptide reads, in one-letter code: Serrate RNA effector molecule homolog (712 aa).

Disordered regions lie at residues 1 to 80 (MVDS…DSIY), 214 to 256 (ADIK…TEKS), and 620 to 712 (QRPV…DDIP). 2 stretches are compositionally biased toward basic and acidic residues: residues 8–26 (GDRRRDKFARERRDEDYRR) and 34–54 (YDNKRPGGRRDDYQVKRSRGD). A compositionally biased stretch (polar residues) spans 65–79 (RSGNGSDLPTESDSI). Basic and acidic residues predominate over residues 214 to 236 (ADIKKDENGNGTEQPKEEPEVKQ). Over residues 240 to 251 (ATEELEEGAIED) the composition is skewed to acidic residues. Basic and acidic residues-rich tracts occupy residues 621–637 (RPVDCEPKQAPRDDHRG) and 645–655 (GYGRERDDDRG). Positions 656–668 (PGGGGRNSFGGGG) are enriched in gly residues.

This sequence belongs to the ARS2 family.

The protein localises to the nucleus. Acts as a mediator between the cap-binding complex (CBC) and the primary microRNAs (miRNAs) processing machinery. Contributes to the stability and delivery of capped primary miRNA transcripts to the primary miRNA processing complex, thereby playing a role in RNA-mediated gene silencing (RNAi) by miRNAs. This Caenorhabditis elegans protein is Serrate RNA effector molecule homolog.